Consider the following 429-residue polypeptide: Glutamate-1-semialdehyde 2,1-aminomutase 2 (429 aa).

Lys267 bears the N6-(pyridoxal phosphate)lysine mark.

This sequence belongs to the class-III pyridoxal-phosphate-dependent aminotransferase family. HemL subfamily. As to quaternary structure, homodimer. It depends on pyridoxal 5'-phosphate as a cofactor.

It localises to the cytoplasm. It carries out the reaction (S)-4-amino-5-oxopentanoate = 5-aminolevulinate. It functions in the pathway porphyrin-containing compound metabolism; protoporphyrin-IX biosynthesis; 5-aminolevulinate from L-glutamyl-tRNA(Glu): step 2/2. In Brevibacillus brevis (strain 47 / JCM 6285 / NBRC 100599), this protein is Glutamate-1-semialdehyde 2,1-aminomutase 2.